The primary structure comprises 99 residues: RNA-binding protein Hfq (99 aa).

The 62-residue stretch at 10-71 folds into the Sm domain; it reads DLFLNQLRKE…ISSILPSKPI (62 aa). Positions 77-99 are disordered; sequence VQNSQVQNTASQQSNNNQNQESK.

Belongs to the Hfq family. As to quaternary structure, homohexamer.

Its function is as follows. RNA chaperone that binds small regulatory RNA (sRNAs) and mRNAs to facilitate mRNA translational regulation in response to envelope stress, environmental stress and changes in metabolite concentrations. Also binds with high specificity to tRNAs. The protein is RNA-binding protein Hfq of Caldicellulosiruptor saccharolyticus (strain ATCC 43494 / DSM 8903 / Tp8T 6331).